Reading from the N-terminus, the 370-residue chain is NADH-quinone oxidoreductase subunit D 2 (370 aa).

Belongs to the complex I 49 kDa subunit family. As to quaternary structure, NDH-1 is composed of 14 different subunits. Subunits NuoB, C, D, E, F, and G constitute the peripheral sector of the complex.

The protein resides in the cell inner membrane. The catalysed reaction is a quinone + NADH + 5 H(+)(in) = a quinol + NAD(+) + 4 H(+)(out). NDH-1 shuttles electrons from NADH, via FMN and iron-sulfur (Fe-S) centers, to quinones in the respiratory chain. The immediate electron acceptor for the enzyme in this species is believed to be ubiquinone. Couples the redox reaction to proton translocation (for every two electrons transferred, four hydrogen ions are translocated across the cytoplasmic membrane), and thus conserves the redox energy in a proton gradient. This chain is NADH-quinone oxidoreductase subunit D 2, found in Solibacter usitatus (strain Ellin6076).